Here is an 87-residue protein sequence, read N- to C-terminus: Translation initiation factor IF-1 2 (87 aa).

In terms of domain architecture, S1-like spans 1–72; that stretch reads MAKEELLELD…TKGRINFRHK (72 aa).

This sequence belongs to the IF-1 family. In terms of assembly, component of the 30S ribosomal translation pre-initiation complex which assembles on the 30S ribosome in the order IF-2 and IF-3, IF-1 and N-formylmethionyl-tRNA(fMet); mRNA recruitment can occur at any time during PIC assembly.

Its subcellular location is the cytoplasm. One of the essential components for the initiation of protein synthesis. Stabilizes the binding of IF-2 and IF-3 on the 30S subunit to which N-formylmethionyl-tRNA(fMet) subsequently binds. Helps modulate mRNA selection, yielding the 30S pre-initiation complex (PIC). Upon addition of the 50S ribosomal subunit IF-1, IF-2 and IF-3 are released leaving the mature 70S translation initiation complex. The polypeptide is Translation initiation factor IF-1 2 (Burkholderia ambifaria (strain ATCC BAA-244 / DSM 16087 / CCUG 44356 / LMG 19182 / AMMD) (Burkholderia cepacia (strain AMMD))).